Consider the following 108-residue polypeptide: Large ribosomal subunit protein uL23 (108 aa).

Belongs to the universal ribosomal protein uL23 family. In terms of assembly, part of the 50S ribosomal subunit. Contacts protein L29, and trigger factor when it is bound to the ribosome.

In terms of biological role, one of the early assembly proteins it binds 23S rRNA. One of the proteins that surrounds the polypeptide exit tunnel on the outside of the ribosome. Forms the main docking site for trigger factor binding to the ribosome. The sequence is that of Large ribosomal subunit protein uL23 from Leptothrix cholodnii (strain ATCC 51168 / LMG 8142 / SP-6) (Leptothrix discophora (strain SP-6)).